Consider the following 89-residue polypeptide: Small ribosomal subunit protein uS15 (89 aa).

The protein belongs to the universal ribosomal protein uS15 family. Part of the 30S ribosomal subunit. Forms a bridge to the 50S subunit in the 70S ribosome, contacting the 23S rRNA.

Its function is as follows. One of the primary rRNA binding proteins, it binds directly to 16S rRNA where it helps nucleate assembly of the platform of the 30S subunit by binding and bridging several RNA helices of the 16S rRNA. In terms of biological role, forms an intersubunit bridge (bridge B4) with the 23S rRNA of the 50S subunit in the ribosome. In Acidithiobacillus ferrooxidans (strain ATCC 23270 / DSM 14882 / CIP 104768 / NCIMB 8455) (Ferrobacillus ferrooxidans (strain ATCC 23270)), this protein is Small ribosomal subunit protein uS15.